Consider the following 294-residue polypeptide: MSFPFASLLKRPSAISSLLSLKKPGSWSSILLKAVGVLSRDSRWHSDLLKMLTEEMDSLNGQINTWTDNNPLLDEITKPYRKSSTRFFHPLLVLLMSRASVNGDPPSQQLFQRYKQLARVTELIHAANIIHINIGEEQSNEQIKLATLVGDYLLGKASVDLAHLENNAITEIMASVIANLVEGHFGSRQNGSVGLSNERTILLQSAFMPAKACLCASILNNSSQYINDACFNYGKFLGLSLQLAHKPVSPDAQVLQKNNDILKTYVENAKSSLSVFPDIEAKQALMEIANSVSK.

This sequence belongs to the FPP/GGPP synthase family. As to quaternary structure, heterotetramer of 2 dps1 and 2 dlp1 subunits.

The protein localises to the mitochondrion. The catalysed reaction is 7 isopentenyl diphosphate + (2E,6E)-farnesyl diphosphate = all-trans-decaprenyl diphosphate + 7 diphosphate. The protein operates within cofactor biosynthesis; ubiquinone biosynthesis. Its function is as follows. Supplies decaprenyl diphosphate, the precursor for the side chain of the isoprenoid quinones ubiquinone-10. The protein is Decaprenyl-diphosphate synthase subunit 2 (dlp1) of Schizosaccharomyces pombe (strain 972 / ATCC 24843) (Fission yeast).